Here is a 108-residue protein sequence, read N- to C-terminus: Phosphoribosyl-ATP pyrophosphatase (108 aa).

This sequence belongs to the PRA-PH family.

Its subcellular location is the cytoplasm. The catalysed reaction is 1-(5-phospho-beta-D-ribosyl)-ATP + H2O = 1-(5-phospho-beta-D-ribosyl)-5'-AMP + diphosphate + H(+). The protein operates within amino-acid biosynthesis; L-histidine biosynthesis; L-histidine from 5-phospho-alpha-D-ribose 1-diphosphate: step 2/9. This Geobacter sulfurreducens (strain ATCC 51573 / DSM 12127 / PCA) protein is Phosphoribosyl-ATP pyrophosphatase.